A 420-amino-acid polypeptide reads, in one-letter code: Histidine--tRNA ligase, chloroplastic (420 aa).

This sequence belongs to the class-II aminoacyl-tRNA synthetase family.

The protein resides in the plastid. It localises to the chloroplast. The catalysed reaction is tRNA(His) + L-histidine + ATP = L-histidyl-tRNA(His) + AMP + diphosphate + H(+). This Gracilaria tenuistipitata var. liui (Red alga) protein is Histidine--tRNA ligase, chloroplastic.